A 230-amino-acid chain; its full sequence is Putative 14-3-3-like protein GF14-H (230 aa).

The protein belongs to the 14-3-3 family.

Its function is as follows. Is associated with a DNA binding complex that binds to the G box, a well-characterized cis-acting DNA regulatory element found in plant genes. This chain is Putative 14-3-3-like protein GF14-H (GF14H), found in Oryza sativa subsp. japonica (Rice).